We begin with the raw amino-acid sequence, 312 residues long: MRNILTIFLLTSTFFTGILWIIDHILLIKNYFYNKKKTKNNNTILINKVILENKKCFFRSLSSLFPTFFIVFIIRSFIYEPFQIPSGSMMPTLLIGDFILVKKFSYGIKEPITNKTIIKMNLPQRGDIVVFKHPKNNIDYIKRVVGLPGDKIQYDINRKKIKICINYTNQKNCENKLFITYSKPKLSNFFQKIYLLKSRTNEEEKVYNSIYFKKVEEKINNLKHNILILDGINSKINDYYQQKGMPKLIWIVPKNKYFMMGDNRDNSLDSRYWGFVPEENLLGKATKIWMSFEKKENEWPTGIRIKRIGNIY.

The chain crosses the membrane as a helical span at residues 7 to 27 (IFLLTSTFFTGILWIIDHILL). At 28–63 (IKNYFYNKKKTKNNNTILINKVILENKKCFFRSLSS) the chain is on the cytoplasmic side. The chain crosses the membrane as a helical span at residues 64–84 (LFPTFFIVFIIRSFIYEPFQI). At 85–312 (PSGSMMPTLL…IRIKRIGNIY (228 aa)) the chain is on the extracellular side. Residues serine 88 and lysine 142 contribute to the active site.

The protein belongs to the peptidase S26 family.

Its subcellular location is the cell membrane. The enzyme catalyses Cleavage of hydrophobic, N-terminal signal or leader sequences from secreted and periplasmic proteins.. This chain is Signal peptidase I (lepB), found in Buchnera aphidicola subsp. Schizaphis graminum (strain Sg).